A 902-amino-acid polypeptide reads, in one-letter code: Cytosolic 10-formyltetrahydrofolate dehydrogenase (902 aa).

The segment at 1–310 is hydrolase domain; sequence MKIAVIGQSL…LASNFFKGAA (310 aa). S9 bears the Phosphoserine mark. Position 38 is an N6-succinyllysine (K38). A (6R)-10-formyltetrahydrofolate-binding site is contributed by 88 to 90; the sequence is QFI. The Proton donor role is filled by H106. (6R)-10-formyltetrahydrofolate is bound at residue D142. The Carrier domain maps to 318–395; that stretch reads EAELVTAEAV…DFIQLLVRKL (78 aa). S354 carries the O-(pantetheine 4'-phosphoryl)serine modification. The tract at residues 417-902 is aldehyde dehydrogenase domain; the sequence is TVRMPHQLFI…LRVKTVTFEY (486 aa). Residues 571–573 and 597–600 each bind NADP(+); these read IPW and KPAQ. Phosphoserine is present on residues S629 and S631. Residues 630–635 and 650–651 contribute to the NADP(+) site; these read GSLVGQ and GS. N6-succinyllysine is present on K660. E673 functions as the Proton acceptor in the catalytic mechanism. Residue 673–674 coordinates NADP(+); that stretch reads EL. The Proton donor role is filled by C707. Position 757 (K757) interacts with NADP(+). K767 carries the N6-succinyllysine modification. NADP(+) is bound at residue 804-806; it reads ESF. Phosphoserine is present on S825. Position 882 is an N6-acetyllysine (K882).

It in the N-terminal section; belongs to the GART family. The protein in the C-terminal section; belongs to the aldehyde dehydrogenase family. ALDH1L subfamily. As to quaternary structure, homotetramer. In terms of processing, phosphopantetheinylation at Ser-354 by AASDHPPT is required for the formyltetrahydrofolate dehydrogenase activity. In terms of tissue distribution, highly expressed in liver, pancreas and kidney.

Its subcellular location is the cytoplasm. It localises to the cytosol. The catalysed reaction is (6R)-10-formyltetrahydrofolate + NADP(+) + H2O = (6S)-5,6,7,8-tetrahydrofolate + CO2 + NADPH + H(+). Its function is as follows. Cytosolic 10-formyltetrahydrofolate dehydrogenase that catalyzes the NADP(+)-dependent conversion of 10-formyltetrahydrofolate to tetrahydrofolate and carbon dioxide. May also have an NADP(+)-dependent aldehyde dehydrogenase activity towards formaldehyde, acetaldehyde, propionaldehyde, and benzaldehyde. The protein is Cytosolic 10-formyltetrahydrofolate dehydrogenase of Homo sapiens (Human).